Here is a 640-residue protein sequence, read N- to C-terminus: Threonine--tRNA ligase (640 aa).

Positions 1 to 61 constitute a TGS domain; sequence MPIITLPDGS…ERDATLQIIT (61 aa). Residues 242 to 533 are catalytic; it reads DHRRIGKQLD…LIEHYAGAFP (292 aa). 3 residues coordinate Zn(2+): cysteine 333, histidine 384, and histidine 510.

It belongs to the class-II aminoacyl-tRNA synthetase family. Homodimer. Zn(2+) serves as cofactor.

The protein resides in the cytoplasm. The enzyme catalyses tRNA(Thr) + L-threonine + ATP = L-threonyl-tRNA(Thr) + AMP + diphosphate + H(+). Functionally, catalyzes the attachment of threonine to tRNA(Thr) in a two-step reaction: L-threonine is first activated by ATP to form Thr-AMP and then transferred to the acceptor end of tRNA(Thr). Also edits incorrectly charged L-seryl-tRNA(Thr). This is Threonine--tRNA ligase from Pseudomonas paraeruginosa (strain DSM 24068 / PA7) (Pseudomonas aeruginosa (strain PA7)).